Reading from the N-terminus, the 78-residue chain is Acyl carrier protein (78 aa).

The Carrier domain maps to 2-77; sequence STIEERVKKI…AAIDYINGHQ (76 aa). Ser37 carries the post-translational modification O-(pantetheine 4'-phosphoryl)serine.

The protein belongs to the acyl carrier protein (ACP) family. Post-translationally, 4'-phosphopantetheine is transferred from CoA to a specific serine of apo-ACP by AcpS. This modification is essential for activity because fatty acids are bound in thioester linkage to the sulfhydryl of the prosthetic group.

It localises to the cytoplasm. The protein operates within lipid metabolism; fatty acid biosynthesis. Carrier of the growing fatty acid chain in fatty acid biosynthesis. This is Acyl carrier protein from Erwinia tasmaniensis (strain DSM 17950 / CFBP 7177 / CIP 109463 / NCPPB 4357 / Et1/99).